The primary structure comprises 327 residues: Phenylalanine--tRNA ligase alpha subunit (327 aa).

Glu252 contacts Mg(2+).

Belongs to the class-II aminoacyl-tRNA synthetase family. Phe-tRNA synthetase alpha subunit type 1 subfamily. As to quaternary structure, tetramer of two alpha and two beta subunits. Mg(2+) is required as a cofactor.

Its subcellular location is the cytoplasm. The catalysed reaction is tRNA(Phe) + L-phenylalanine + ATP = L-phenylalanyl-tRNA(Phe) + AMP + diphosphate + H(+). The sequence is that of Phenylalanine--tRNA ligase alpha subunit from Escherichia coli O139:H28 (strain E24377A / ETEC).